The sequence spans 312 residues: Serine acetyltransferase 5 (312 aa).

Residues 1–17 (MPPAGELRHQSPSKEKL) show a composition bias toward basic and acidic residues. Positions 1–25 (MPPAGELRHQSPSKEKLSSVTQSDE) are disordered.

The protein belongs to the transferase hexapeptide repeat family. Homomultimer. In terms of tissue distribution, mostly expressed in stems, flowers and siliques. Localized in vascular tissues, particularly in phloem.

Its subcellular location is the cytoplasm. The catalysed reaction is L-serine + acetyl-CoA = O-acetyl-L-serine + CoA. Its pathway is amino-acid biosynthesis; L-cysteine biosynthesis; L-cysteine from L-serine: step 1/2. With respect to regulation, feedback inhibitions by L-Ser and acetyl-CoA. The chain is Serine acetyltransferase 5 (SAT5) from Arabidopsis thaliana (Mouse-ear cress).